Consider the following 469-residue polypeptide: D-3-phosphoglycerate dehydrogenase 1 (469 aa).

Residues Ser22, Ser29, and Ser33 each carry the phosphoserine modification. NAD(+) contacts are provided by residues 208 to 209 (HI), Asp228, 285 to 287 (ASR), and Asp311. Arg287 is a catalytic residue. The active site involves Glu316. His347 acts as the Proton donor in catalysis. Residue 347–350 (HIGG) coordinates NAD(+). The ACT domain maps to 399 to 469 (RVLYIHQNVP…SAKISIRLLY (71 aa)).

Belongs to the D-isomer specific 2-hydroxyacid dehydrogenase family.

It catalyses the reaction (2R)-3-phosphoglycerate + NAD(+) = 3-phosphooxypyruvate + NADH + H(+). The catalysed reaction is (R)-2-hydroxyglutarate + NAD(+) = 2-oxoglutarate + NADH + H(+). Its pathway is amino-acid biosynthesis; L-serine biosynthesis; L-serine from 3-phospho-D-glycerate: step 1/3. Its function is as follows. Catalyzes the reversible oxidation of 3-phospho-D-glycerate to 3-phosphonooxypyruvate, the first step of the phosphorylated L-serine biosynthesis pathway. Also catalyzes the reversible oxidation of 2-hydroxyglutarate to 2-oxoglutarate. This Saccharomyces cerevisiae (strain ATCC 204508 / S288c) (Baker's yeast) protein is D-3-phosphoglycerate dehydrogenase 1 (SER3).